The chain runs to 162 residues: Cyclic pyranopterin monophosphate synthase (162 aa).

Residues 75–77 (MCH) and 115–116 (ME) contribute to the substrate site. The active site involves Asp-130.

It belongs to the MoaC family. Homohexamer; trimer of dimers.

The catalysed reaction is (8S)-3',8-cyclo-7,8-dihydroguanosine 5'-triphosphate = cyclic pyranopterin phosphate + diphosphate. The protein operates within cofactor biosynthesis; molybdopterin biosynthesis. Catalyzes the conversion of (8S)-3',8-cyclo-7,8-dihydroguanosine 5'-triphosphate to cyclic pyranopterin monophosphate (cPMP). This chain is Cyclic pyranopterin monophosphate synthase, found in Geobacillus thermodenitrificans (strain NG80-2).